The chain runs to 218 residues: 3,4-dihydroxy-2-butanone 4-phosphate synthase (218 aa).

D-ribulose 5-phosphate is bound by residues 38-39 (RE), aspartate 43, 151-155 (RRGHT), and glutamate 175. Glutamate 39 serves as a coordination point for Mg(2+). Residue histidine 154 coordinates Mg(2+).

The protein belongs to the DHBP synthase family. As to quaternary structure, homodimer. Requires Mg(2+) as cofactor. Mn(2+) is required as a cofactor.

It catalyses the reaction D-ribulose 5-phosphate = (2S)-2-hydroxy-3-oxobutyl phosphate + formate + H(+). It functions in the pathway cofactor biosynthesis; riboflavin biosynthesis; 2-hydroxy-3-oxobutyl phosphate from D-ribulose 5-phosphate: step 1/1. Catalyzes the conversion of D-ribulose 5-phosphate to formate and 3,4-dihydroxy-2-butanone 4-phosphate. The polypeptide is 3,4-dihydroxy-2-butanone 4-phosphate synthase (Vibrio cholerae serotype O1 (strain ATCC 39541 / Classical Ogawa 395 / O395)).